The following is a 560-amino-acid chain: Cytosolic purine 5'-nucleotidase (560 aa).

The Nucleophile role is filled by Asp-52. IMP is bound by residues Asp-52 and Asp-54. Residues Asp-52 and Asp-54 each contribute to the Mg(2+) site. Asp-54 serves as the catalytic Proton donor. ATP contacts are provided by Arg-144 and Asn-154. Residues Arg-202, Asp-206, Lys-215, Thr-249, Asn-250, Ser-251, and Lys-292 each contribute to the IMP site. Asp-351 contacts Mg(2+). Residue Ser-418 is modified to Phosphoserine. Gln-453 and Arg-456 together coordinate ATP. Phosphoserine is present on residues Ser-502, Ser-511, and Ser-527. A disordered region spans residues 541 to 560; sequence PQEITHCHDEDDDEEEEEEE. Residues 548–560 form a required for tetramer assembly region; it reads HDEDDDEEEEEEE. Residues 550–560 are compositionally biased toward acidic residues; that stretch reads EDDDEEEEEEE.

The protein belongs to the 5'(3')-deoxyribonucleotidase family. Homotetramer. Requires Mg(2+) as cofactor.

The protein localises to the cytoplasm. The protein resides in the cytosol. It catalyses the reaction a ribonucleoside 5'-phosphate + H2O = a ribonucleoside + phosphate. The catalysed reaction is a 2'-deoxyribonucleoside + a ribonucleoside 5'-phosphate = a ribonucleoside + a 2'-deoxyribonucleoside 5'-phosphate. It carries out the reaction IMP + H2O = inosine + phosphate. The enzyme catalyses GMP + H2O = guanosine + phosphate. It catalyses the reaction dIMP + H2O = 2'-deoxyinosine + phosphate. The catalysed reaction is dGMP + H2O = 2'-deoxyguanosine + phosphate. It carries out the reaction XMP + H2O = xanthosine + phosphate. The enzyme catalyses inosine + GMP = guanosine + IMP. It catalyses the reaction dGMP + inosine = 2'-deoxyguanosine + IMP. The catalysed reaction is dIMP + inosine = 2'-deoxyinosine + IMP. It carries out the reaction inosine + UMP = uridine + IMP. The enzyme catalyses inosine + CMP = cytidine + IMP. It catalyses the reaction inosine + AMP = IMP + adenosine. Allosterically activated by various compounds including ATP, 2,3-BPG/2,3-Bisphosphoglyceric acid and Ap4A/P1,P4-bis(5'-adenosyl) tetraphosphate. Binding of an allosteric activator is a prerequisiste to magnesium and substrate binding. Inhibited by inorganic phosphate. In terms of biological role, broad specificity cytosolic 5'-nucleotidase that catalyzes the dephosphorylation of 6-hydroxypurine nucleoside 5'-monophosphates. In addition, possesses a phosphotransferase activity by which it can transfer a phosphate from a donor nucleoside monophosphate to an acceptor nucleoside, preferably inosine, deoxyinosine and guanosine. Has the highest activities for IMP and GMP followed by dIMP, dGMP and XMP. Could also catalyze the transfer of phosphates from pyrimidine monophosphates but with lower efficiency. Through these activities regulates the purine nucleoside/nucleotide pools within the cell. The sequence is that of Cytosolic purine 5'-nucleotidase from Bos taurus (Bovine).